The chain runs to 354 residues: Uroporphyrinogen decarboxylase (354 aa).

Substrate contacts are provided by residues 25–29 (RQAGR), Phe-44, Asp-75, Tyr-152, Thr-207, and His-330.

Belongs to the uroporphyrinogen decarboxylase family. As to quaternary structure, homodimer.

It localises to the cytoplasm. It catalyses the reaction uroporphyrinogen III + 4 H(+) = coproporphyrinogen III + 4 CO2. Its pathway is porphyrin-containing compound metabolism; protoporphyrin-IX biosynthesis; coproporphyrinogen-III from 5-aminolevulinate: step 4/4. Its function is as follows. Catalyzes the decarboxylation of four acetate groups of uroporphyrinogen-III to yield coproporphyrinogen-III. The sequence is that of Uroporphyrinogen decarboxylase from Xanthomonas axonopodis pv. citri (strain 306).